We begin with the raw amino-acid sequence, 221 residues long: Urease accessory protein UreG (221 aa).

Position 19–26 (19–26 (GPVGSGKT)) interacts with GTP.

It belongs to the SIMIBI class G3E GTPase family. UreG subfamily. In terms of assembly, homodimer. UreD, UreF and UreG form a complex that acts as a GTP-hydrolysis-dependent molecular chaperone, activating the urease apoprotein by helping to assemble the nickel containing metallocenter of UreC. The UreE protein probably delivers the nickel.

Its subcellular location is the cytoplasm. Functionally, facilitates the functional incorporation of the urease nickel metallocenter. This process requires GTP hydrolysis, probably effectuated by UreG. The chain is Urease accessory protein UreG from Yersinia enterocolitica serotype O:8 / biotype 1B (strain NCTC 13174 / 8081).